Here is a 313-residue protein sequence, read N- to C-terminus: ADP-L-glycero-D-manno-heptose-6-epimerase (313 aa).

NADP(+) contacts are provided by residues 10–11, 31–32, lysine 38, arginine 53, 75–79, and asparagine 92; these read MI, DN, and EGACS. Residue tyrosine 139 is the Proton acceptor of the active site. Residue lysine 143 participates in NADP(+) binding. Asparagine 174 contributes to the substrate binding site. Positions 175 and 183 each coordinate NADP(+). The active-site Proton acceptor is lysine 183. Residues serine 185, histidine 192, 206-209, arginine 214, and tyrosine 277 contribute to the substrate site; that span reads FAGS.

Belongs to the NAD(P)-dependent epimerase/dehydratase family. HldD subfamily. Homopentamer. Requires NADP(+) as cofactor.

It catalyses the reaction ADP-D-glycero-beta-D-manno-heptose = ADP-L-glycero-beta-D-manno-heptose. Its pathway is nucleotide-sugar biosynthesis; ADP-L-glycero-beta-D-manno-heptose biosynthesis; ADP-L-glycero-beta-D-manno-heptose from D-glycero-beta-D-manno-heptose 7-phosphate: step 4/4. It functions in the pathway bacterial outer membrane biogenesis; LPS core biosynthesis. In terms of biological role, catalyzes the interconversion between ADP-D-glycero-beta-D-manno-heptose and ADP-L-glycero-beta-D-manno-heptose via an epimerization at carbon 6 of the heptose. In Vibrio vulnificus (strain YJ016), this protein is ADP-L-glycero-D-manno-heptose-6-epimerase.